A 333-amino-acid chain; its full sequence is Adenosine deaminase (333 aa).

Residues histidine 12 and histidine 14 each coordinate Zn(2+). Residues histidine 14, aspartate 16, and glycine 170 each coordinate substrate. Histidine 197 provides a ligand contact to Zn(2+). Glutamate 200 (proton donor) is an active-site residue. Residue aspartate 278 coordinates Zn(2+). Residue aspartate 279 coordinates substrate.

Belongs to the metallo-dependent hydrolases superfamily. Adenosine and AMP deaminases family. Adenosine deaminase subfamily. It depends on Zn(2+) as a cofactor.

The enzyme catalyses adenosine + H2O + H(+) = inosine + NH4(+). It carries out the reaction 2'-deoxyadenosine + H2O + H(+) = 2'-deoxyinosine + NH4(+). In terms of biological role, catalyzes the hydrolytic deamination of adenosine and 2-deoxyadenosine. The protein is Adenosine deaminase of Escherichia coli O139:H28 (strain E24377A / ETEC).